The chain runs to 237 residues: Uridylate kinase (237 aa).

An ATP-binding site is contributed by 9-12; it reads KLSG. Gly51 serves as a coordination point for UMP. Gly52 and Arg56 together coordinate ATP. UMP contacts are provided by residues Asp71 and 132-139; that span reads CGNPFFTT. Residues Thr159, Tyr165, and Asp168 each coordinate ATP.

This sequence belongs to the UMP kinase family. As to quaternary structure, homohexamer.

It is found in the cytoplasm. It carries out the reaction UMP + ATP = UDP + ADP. Its pathway is pyrimidine metabolism; CTP biosynthesis via de novo pathway; UDP from UMP (UMPK route): step 1/1. With respect to regulation, inhibited by UTP. Its function is as follows. Catalyzes the reversible phosphorylation of UMP to UDP. This is Uridylate kinase from Prochlorococcus marinus (strain NATL1A).